A 101-amino-acid polypeptide reads, in one-letter code: Urease subunit beta (101 aa).

It belongs to the urease beta subunit family. In terms of assembly, heterotrimer of UreA (gamma), UreB (beta) and UreC (alpha) subunits. Three heterotrimers associate to form the active enzyme.

The protein resides in the cytoplasm. It catalyses the reaction urea + 2 H2O + H(+) = hydrogencarbonate + 2 NH4(+). It participates in nitrogen metabolism; urea degradation; CO(2) and NH(3) from urea (urease route): step 1/1. The chain is Urease subunit beta from Hahella chejuensis (strain KCTC 2396).